We begin with the raw amino-acid sequence, 229 residues long: Potassium/proton antiporter CemA (229 aa).

The next 4 membrane-spanning stretches (helical) occupy residues 11–31 (TTPFLYLASIVFLPWWISLFF), 118–138 (IISFVILSVCSILGNEELVIL), 158–178 (LLALTDFLFGFHTISAWELLI), and 190–210 (LLVCLFPSVLHTIYYFWTFNY).

Belongs to the CemA family.

It is found in the plastid. It localises to the chloroplast inner membrane. The catalysed reaction is K(+)(in) + H(+)(out) = K(+)(out) + H(+)(in). Contributes to K(+)/H(+) antiport activity by supporting proton efflux to control proton extrusion and homeostasis in chloroplasts in a light-dependent manner to modulate photosynthesis. Prevents excessive induction of non-photochemical quenching (NPQ) under continuous-light conditions. Indirectly promotes efficient inorganic carbon uptake into chloroplasts. The chain is Potassium/proton antiporter CemA from Pelargonium hortorum (Common geranium).